Here is a 708-residue protein sequence, read N- to C-terminus: Leukotoxin translocation ATP-binding protein LktB (708 aa).

The region spanning 1–126 (MEANHQRNDL…ACYQGQLILV (126 aa)) is the Peptidase C39 domain. One can recognise an ABC transmembrane type-1 domain in the interval 155–437 (FLETLIVSIF…LAQLWQDFQQ (283 aa)). A run of 5 helical transmembrane segments spans residues 159–179 (LIVS…FQVV), 192–212 (LNII…LSGL), 270–290 (ALTS…MWYY), 296–316 (LVIL…SPIL), and 389–409 (VMVI…LSIG). Positions 469-704 (ISFKNIRFRY…SNGLYSYLHQ (236 aa)) constitute an ABC transporter domain. ATP is bound at residue 503 to 510 (GRSGSGKS).

It belongs to the ABC transporter superfamily. Protein-1 exporter (TC 3.A.1.109) family. As to quaternary structure, homodimer.

The protein localises to the cell inner membrane. It catalyses the reaction ATP + H2O + proteinSide 1 = ADP + phosphate + proteinSide 2.. Part of the ABC transporter complex LktBD involved in leukotoxin export. Transmembrane domains (TMD) form a pore in the inner membrane and the ATP-binding domain (NBD) is responsible for energy generation. This is Leukotoxin translocation ATP-binding protein LktB (lktB) from Mannheimia haemolytica (Pasteurella haemolytica).